The following is a 300-amino-acid chain: ESX-5 secretion-associated protein EspG5 (300 aa).

The protein belongs to the EspG family. As to quaternary structure, interacts specifically with ESX-5-dependent PE/PPE proteins. Binds PPE33 and PPE18. Does not interact with EsxN. Monomer in solution.

The protein resides in the cytoplasm. Its function is as follows. Specific chaperone for cognate PE/PPE proteins. Plays an important role in preventing aggregation of PE/PPE dimers. Required for LipY and PE31/PPE18 secretion. This chain is ESX-5 secretion-associated protein EspG5, found in Mycobacterium marinum (strain ATCC BAA-535 / M).